Reading from the N-terminus, the 199-residue chain is Protein P1 (199 aa).

The sequence is that of Protein P1 from Rice tungro bacilliform virus (isolate Philippines) (RTBV).